Reading from the N-terminus, the 162-residue chain is Ubiquitin D (162 aa).

Ubiquitin-like domains follow at residues 3–78 (SVRT…LKVV) and 87–160 (LFLV…THCT).

The protein belongs to the ubiquitin D family. In terms of assembly, interacts directly with the 26S proteasome. Interacts with NUB1; this interaction facilitates the linking of UBD-conjugated target protein to the proteasome complex and accelerates its own degradation and that of its conjugates. Interacts (via ubiquitin-like 1 domain) with the spindle checkpoint protein MAD2L1 during mitosis. Present in aggresomes of proteasome inhibited cells. Interacts with HDAC6 under proteasome impairment conditions. Forms a thioester with UBA6 in cells stimulated with tumor necrosis factor-alpha (TNFa) and interferon-gamma (IFNg). Interacts with SQSTM1 and TP53/p53. In terms of processing, can be acetylated. As to expression, mostly expressed in thymus and intestine.

The protein resides in the nucleus. It localises to the cytoplasm. Functionally, ubiquitin-like protein modifier which can be covalently attached to target proteins and subsequently leads to their degradation by the 26S proteasome, in a NUB1-dependent manner. Conjugation to the target protein is activated by UBA6 via adenylation of its C-terminal glycine. Probably functions as a survival factor. Promotes the expression of the proteasome subunit beta type-9 (PSMB9/LMP2). Regulates TNF-alpha-induced and LPS-mediated activation of the central mediator of innate immunity NF-kappa-B by promoting TNF-alpha-mediated proteasomal degradation of ubiquitinated-I-kappa-B-alpha. Required for TNF-alpha-induced p65 nuclear translocation in renal tubular epithelial cells (RTECs). May be involved in dendritic cell (DC) maturation, the process by which immature dendritic cells differentiate into fully competent antigen-presenting cells that initiate T-cell responses. Mediates mitotic non-disjunction and chromosome instability, in long-term in vitro culture and cancers, by abbreviating mitotic phase and impairing the kinetochore localization of MAD2L1 during the prometaphase stage of the cell cycle. May be involved in the formation of aggresomes when proteasome is saturated or impaired. Mediates apoptosis in a caspase-dependent manner, especially in renal epithelium and tubular cells during renal diseases. The polypeptide is Ubiquitin D (Ubd) (Mus musculus (Mouse)).